We begin with the raw amino-acid sequence, 382 residues long: RIB43A-like with coiled-coils protein 2 (382 aa).

The stretch at 222 to 255 (NKSQAIESVERKKQEKKQEQEDNLAEITNLLRGD) forms a coiled coil.

Belongs to the RIB43A family. As to quaternary structure, microtubule inner protein component of sperm flagellar doublet microtubules. In terms of tissue distribution, expressed in airway epithelial cells.

The protein resides in the cytoplasm. Its subcellular location is the cytoskeleton. It is found in the cilium axoneme. The protein localises to the flagellum axoneme. In terms of biological role, microtubule inner protein (MIP) part of the dynein-decorated doublet microtubules (DMTs) in cilia axoneme, which is required for motile cilia beating. The protein is RIB43A-like with coiled-coils protein 2 of Homo sapiens (Human).